The primary structure comprises 338 residues: Hydroxyproline O-galactosyltransferase HPGT1 (338 aa).

Residues 1 to 12 (MARKGSSIRLSS) lie on the Cytoplasmic side of the membrane. A helical; Signal-anchor for type II membrane protein membrane pass occupies residues 13 to 32 (SRISTLLLFMFATFASFYVA). Residues 33–338 (GRLWQESQTR…WSSEAICAGV (306 aa)) lie on the Lumenal side of the membrane.

The protein belongs to the glycosyltransferase 31 family. Mn(2+) is required as a cofactor. As to expression, expressed in roots, rosette leaves, cauline leaves, stems, flowers and siliques.

The protein resides in the golgi apparatus membrane. Its pathway is protein modification; protein glycosylation. Its function is as follows. Possesses hydroxyproline O-galactosyltransferase activity. Transfers galactose from UDP-galactose to hydroxyproline residues in the arabinogalactan proteins (AGPs). Is specific for AGPs containing non-contiguous peptidyl hydroxyproline residues. The addition of galactose onto the peptidyl hydroxyproline residues in AGP core proteins represents the first committed step in arabinogalactan polysaccharide addition. AGP glycans play essential roles in both vegetative and reproductive plant growth. In Arabidopsis thaliana (Mouse-ear cress), this protein is Hydroxyproline O-galactosyltransferase HPGT1.